A 433-amino-acid chain; its full sequence is Acetyl-CoA-benzylalcohol acetyltransferase (433 aa).

Active-site proton acceptor residues include His-152 and Asp-377.

It belongs to the plant acyltransferase family.

The enzyme catalyses benzyl alcohol + acetyl-CoA = benzyl acetate + CoA. The catalysed reaction is (E)-cinnamyl alcohol + acetyl-CoA = (E)-cinnamyl acetate + CoA. Involved in the biosynthesis of benzyl acetate, a major constituent of the floral scent. Can use benzylalcohol, cinnamylalcohol, 3-cis-hexene-1-ol or heptanol as substrates. Has some activity with 2-phenylethanol and 2-naphtalene-ethanol. The polypeptide is Acetyl-CoA-benzylalcohol acetyltransferase (BEAT) (Clarkia breweri (Fairy fans)).